We begin with the raw amino-acid sequence, 131 residues long: Snaclec macrovipecetin subunit alpha (131 aa).

Disulfide bonds link cysteine 2–cysteine 13, cysteine 30–cysteine 125, and cysteine 100–cysteine 117. Positions 9 to 126 (HEEHCYKVFR…CEDKNPFICK (118 aa)) constitute a C-type lectin domain.

Heterodimer of subunits alpha and beta; disulfide-linked. In terms of tissue distribution, expressed by the venom gland.

It localises to the secreted. Its function is as follows. Interferes with one step of hemostasis (modulation of platelet aggregation, or coagulation cascade, for example). The protein is Snaclec macrovipecetin subunit alpha of Macrovipera lebetinus (Levantine viper).